A 749-amino-acid chain; its full sequence is MQSLLDGHHHQLPSLLQQHHNGHHLLDQHQQHQHQLPPQATTTSESDGRAPRDELEMSKSGGSDNLESGGGGGGGGSGGDQDPNQRPRKKRYHRHTQHQIQELEAFFKECPHPDDKQRKELSRELGLEPLQVKFWFQNKRTQMKTQHERHENNALRAENEKLRAENMRYKEALANASCPNCGGPAAIGEMSFDEHHLRLENARLRDEIDRISAIAAKYVGKPAAAVSAAYPPLPPSNRSPLDHMGIPGAGADVFGADFDKPLVIELAVAAMEELVRMAQLGEPLWAPALGGEALGEEEYARTFPRGLGPKSPELRSEASRETAVVIMNHVSLVEMLMDVGQWTALFSSIVSRAATLEVLSTGVAGNHNGALQLMSAEFQMPSPLVPTRETQFLRYCKQHPDGTWAVVDVSLDGLRAGAGGGCQPAAARGHRRRPSGCLIQEMPNGYSKVTWVEHVEADDQMVHNLYKPVVNSGMAFGARRWVATLERQCERLASAMASNVASSGDAGVITTSEGRRSMLKLAERMVASFCGGVTASTTHQWTTLSGSGAEDVRVMTRKSVDDPGRPPGIILNAATSFWLPVPPSRVFDFLRDDSTRSEWDILSNGGVVQEMAHIANGRDHGNAVSLLRVNNANSNQSNMLILQECCTDATGSYVIYAPVDVVAMNVVLNGGDPDYVALLPSGFAILPDGPDGGGGSLLTVAFQILVDSVPTAKLSLGSVATVNSLIACTVERIKAAITGDNGVAPPCPR.

The segment at 26 to 98 is disordered; that stretch reads LDQHQQHQHQ…KKRYHRHTQH (73 aa). The span at 46–57 shows a compositional bias: basic and acidic residues; the sequence is SDGRAPRDELEM. Residues 68–79 show a composition bias toward gly residues; sequence SGGGGGGGGSGG. Basic residues predominate over residues 86–97; the sequence is RPRKKRYHRHTQ. Positions 88–147 form a DNA-binding region, homeobox; sequence RKKRYHRHTQHQIQELEAFFKECPHPDDKQRKELSRELGLEPLQVKFWFQNKRTQMKTQH. Residues 137-218 are a coiled coil; the sequence is QNKRTQMKTQ…DRISAIAAKY (82 aa). The region spanning 256–494 is the START domain; that stretch reads ADFDKPLVIE…LERQCERLAS (239 aa).

The protein belongs to the HD-ZIP homeobox family. Class IV subfamily.

Its subcellular location is the nucleus. Probable transcription factor. This chain is Homeobox-leucine zipper protein ROC7 (ROC7), found in Oryza sativa subsp. japonica (Rice).